Here is a 103-residue protein sequence, read N- to C-terminus: Pyrimidine/purine nucleoside phosphorylase (103 aa).

It belongs to the nucleoside phosphorylase PpnP family.

The catalysed reaction is a purine D-ribonucleoside + phosphate = a purine nucleobase + alpha-D-ribose 1-phosphate. The enzyme catalyses adenosine + phosphate = alpha-D-ribose 1-phosphate + adenine. It catalyses the reaction cytidine + phosphate = cytosine + alpha-D-ribose 1-phosphate. It carries out the reaction guanosine + phosphate = alpha-D-ribose 1-phosphate + guanine. The catalysed reaction is inosine + phosphate = alpha-D-ribose 1-phosphate + hypoxanthine. The enzyme catalyses thymidine + phosphate = 2-deoxy-alpha-D-ribose 1-phosphate + thymine. It catalyses the reaction uridine + phosphate = alpha-D-ribose 1-phosphate + uracil. It carries out the reaction xanthosine + phosphate = alpha-D-ribose 1-phosphate + xanthine. Catalyzes the phosphorolysis of diverse nucleosides, yielding D-ribose 1-phosphate and the respective free bases. Can use uridine, adenosine, guanosine, cytidine, thymidine, inosine and xanthosine as substrates. Also catalyzes the reverse reactions. This chain is Pyrimidine/purine nucleoside phosphorylase, found in Shewanella putrefaciens (strain CN-32 / ATCC BAA-453).